The primary structure comprises 21 residues: Putative pancreatic polypeptide 2 (21 aa).

It belongs to the NPY family.

This chain is Putative pancreatic polypeptide 2 (PPY2P), found in Homo sapiens (Human).